The primary structure comprises 1106 residues: Probable NAD-specific glutamate dehydrogenase (1106 aa).

K654 is a catalytic residue.

The protein belongs to the Glu/Leu/Phe/Val dehydrogenases family. In terms of assembly, homotetramer.

It localises to the cytoplasm. The catalysed reaction is L-glutamate + NAD(+) + H2O = 2-oxoglutarate + NH4(+) + NADH + H(+). Functionally, NAD(+)-dependent glutamate dehydrogenase which degrades glutamate to ammonia and alpha-ketoglutarate. The protein is Probable NAD-specific glutamate dehydrogenase (gdh2) of Schizosaccharomyces pombe (strain 972 / ATCC 24843) (Fission yeast).